The sequence spans 1083 residues: Rho GTPase-activating protein 39 (1083 aa).

An N-acetylserine modification is found at S2. 2 WW domains span residues 25-58 and 63-97; these read NTRL…PPAG and RTSE…RPQG. The disordered stretch occupies residues 110–154; sequence KQNTESPRASAESSPGRGSSVSREGSTSSSLEPEPDTEKAQELPA. Low complexity predominate over residues 117 to 141; the sequence is RASAESSPGRGSSVSREGSTSSSLE. Phosphoserine is present on S169. The segment at 226 to 369 is disordered; it reads AAQGNGYAPD…NKQGPPSPCQ (144 aa). A compositionally biased stretch (polar residues) spans 245–256; that stretch reads PSGSQHSPSLQT. The span at 268–280 shows a compositional bias: basic and acidic residues; it reads PERRPSPFLKRAE. A phosphoserine mark is found at S286, S384, S388, S406, and S407. Disordered regions lie at residues 405–545 and 570–599; these read GSSP…EAEG and MKQR…PGPV. 2 stretches are compositionally biased toward polar residues: residues 474–488 and 573–582; these read SWSS…TGYS and RSSWDSQQDG. A phosphoserine mark is found at S604, S690, S715, and S726. The region spanning 722-879 is the MyTH4 domain; that stretch reads WSSESIKKPM…PNVEEIRHAK (158 aa). The 189-residue stretch at 890 to 1078 folds into the Rho-GAP domain; it reads SALQEVMGMQ…VLIQHLDTSF (189 aa).

The protein resides in the nucleus. The sequence is that of Rho GTPase-activating protein 39 (ARHGAP39) from Homo sapiens (Human).